A 99-amino-acid chain; its full sequence is Integration host factor subunit alpha (99 aa).

It belongs to the bacterial histone-like protein family. In terms of assembly, heterodimer of an alpha and a beta chain.

Functionally, this protein is one of the two subunits of integration host factor, a specific DNA-binding protein that functions in genetic recombination as well as in transcriptional and translational control. The sequence is that of Integration host factor subunit alpha from Nitrosococcus oceani (strain ATCC 19707 / BCRC 17464 / JCM 30415 / NCIMB 11848 / C-107).